The chain runs to 269 residues: Glutamate racemase (269 aa).

Substrate is bound by residues 14–15 (DS) and 46–47 (YS). Cys78 functions as the Proton donor/acceptor in the catalytic mechanism. 79–80 (NT) contributes to the substrate binding site. Cys189 (proton donor/acceptor) is an active-site residue. A substrate-binding site is contributed by 190 to 191 (TH).

Belongs to the aspartate/glutamate racemases family.

It carries out the reaction L-glutamate = D-glutamate. The protein operates within cell wall biogenesis; peptidoglycan biosynthesis. Provides the (R)-glutamate required for cell wall biosynthesis. The chain is Glutamate racemase from Haemophilus influenzae (strain PittGG).